We begin with the raw amino-acid sequence, 344 residues long: Protein RecA (344 aa).

66 to 73 contributes to the ATP binding site; sequence GPESSGKT.

Belongs to the RecA family.

The protein localises to the cytoplasm. Its function is as follows. Can catalyze the hydrolysis of ATP in the presence of single-stranded DNA, the ATP-dependent uptake of single-stranded DNA by duplex DNA, and the ATP-dependent hybridization of homologous single-stranded DNAs. It interacts with LexA causing its activation and leading to its autocatalytic cleavage. The protein is Protein RecA of Methylobacillus flagellatus.